Consider the following 230-residue polypeptide: Orotidine 5'-phosphate decarboxylase (230 aa).

Residues aspartate 11, lysine 34, 61-70, threonine 117, arginine 179, glutamine 188, glycine 208, and arginine 209 contribute to the substrate site; that span reads DLKLHDIPNT. Residue lysine 63 is the Proton donor of the active site.

It belongs to the OMP decarboxylase family. Type 1 subfamily. Homodimer.

It carries out the reaction orotidine 5'-phosphate + H(+) = UMP + CO2. It functions in the pathway pyrimidine metabolism; UMP biosynthesis via de novo pathway; UMP from orotate: step 2/2. Its function is as follows. Catalyzes the decarboxylation of orotidine 5'-monophosphate (OMP) to uridine 5'-monophosphate (UMP). This Streptococcus mutans serotype c (strain ATCC 700610 / UA159) protein is Orotidine 5'-phosphate decarboxylase.